The primary structure comprises 691 residues: Protein phosphatase Slingshot homolog (691 aa).

The DEK-C domain maps to 236–291; the sequence is EETERIIKLKLRDILRESDLENITSKEVRSALEQHTLCALQDYKEFIDNEMIIILA. Residues 295-436 enclose the Tyrosine-protein phosphatase domain; that stretch reads RPSEIFPYLY…LQTYQGILGA (142 aa). Cysteine 380 functions as the Phosphocysteine intermediate in the catalytic mechanism. Residues 532 to 580 are a coiled coil; it reads NEHVLSKEQIIQEEKKVMELEKGPEWVVKNNVLEEMKETEERELPNFEL. Residues 585 to 620 form a disordered region; sequence NQSRERDQETIKESSVITQGSSSLDEVFESSTPTRS. Residues 587 to 596 are compositionally biased toward basic and acidic residues; that stretch reads SRERDQETIK. Positions 597–619 are enriched in polar residues; that stretch reads ESSVITQGSSSLDEVFESSTPTR.

Belongs to the protein-tyrosine phosphatase family. In terms of assembly, interacts with actin and this stimulates phosphatase activity.

It is found in the cytoplasm. It localises to the cytoskeleton. The protein resides in the cleavage furrow. Its subcellular location is the midbody. The catalysed reaction is O-phospho-L-tyrosyl-[protein] + H2O = L-tyrosyl-[protein] + phosphate. It catalyses the reaction O-phospho-L-seryl-[protein] + H2O = L-seryl-[protein] + phosphate. The enzyme catalyses O-phospho-L-threonyl-[protein] + H2O = L-threonyl-[protein] + phosphate. Its function is as follows. Protein phosphatase which regulates actin filament dynamics. Dephosphorylates and activates the actin binding/depolymerizing factor cofilin, which subsequently binds to actin filaments and stimulates their disassembly. Required for completion of the gastrulation movement and for cytokinesis. This is Protein phosphatase Slingshot homolog (ssh) from Xenopus laevis (African clawed frog).